The primary structure comprises 218 residues: 7-cyano-7-deazaguanine synthase (218 aa).

ATP is bound at residue 9–19 (YSGGMDSFTVL). 4 residues coordinate Zn(2+): C185, C193, C196, and C199.

Belongs to the QueC family. Zn(2+) is required as a cofactor.

It carries out the reaction 7-carboxy-7-deazaguanine + NH4(+) + ATP = 7-cyano-7-deazaguanine + ADP + phosphate + H2O + H(+). Its pathway is purine metabolism; 7-cyano-7-deazaguanine biosynthesis. Catalyzes the ATP-dependent conversion of 7-carboxy-7-deazaguanine (CDG) to 7-cyano-7-deazaguanine (preQ(0)). This Alteromonas mediterranea (strain DSM 17117 / CIP 110805 / LMG 28347 / Deep ecotype) protein is 7-cyano-7-deazaguanine synthase.